The chain runs to 344 residues: Anthranilate phosphoribosyltransferase (344 aa).

5-phospho-alpha-D-ribose 1-diphosphate contacts are provided by residues Gly-85, 88 to 89, Thr-93, 95 to 98, 113 to 121, and Ser-125; these read GD, NIST, and KHGGRSVSS. An anthranilate-binding site is contributed by Gly-85. Residue Ser-97 coordinates Mg(2+). Arg-171 serves as a coordination point for anthranilate. Residues Asp-230 and Glu-231 each contribute to the Mg(2+) site.

Belongs to the anthranilate phosphoribosyltransferase family. Homodimer. It depends on Mg(2+) as a cofactor.

It carries out the reaction N-(5-phospho-beta-D-ribosyl)anthranilate + diphosphate = 5-phospho-alpha-D-ribose 1-diphosphate + anthranilate. Its pathway is amino-acid biosynthesis; L-tryptophan biosynthesis; L-tryptophan from chorismate: step 2/5. In terms of biological role, catalyzes the transfer of the phosphoribosyl group of 5-phosphorylribose-1-pyrophosphate (PRPP) to anthranilate to yield N-(5'-phosphoribosyl)-anthranilate (PRA). This chain is Anthranilate phosphoribosyltransferase, found in Acidovorax ebreus (strain TPSY) (Diaphorobacter sp. (strain TPSY)).